A 242-amino-acid chain; its full sequence is Uridylate kinase (242 aa).

Residue 16 to 19 (KVSG) coordinates ATP. Glycine 58 contributes to the UMP binding site. Residues glycine 59 and arginine 63 each contribute to the ATP site. UMP contacts are provided by residues aspartate 78 and 139-146 (TGNPFCTT). ATP contacts are provided by threonine 166, glutamine 167, tyrosine 172, and aspartate 175.

The protein belongs to the UMP kinase family. As to quaternary structure, homohexamer.

Its subcellular location is the cytoplasm. The enzyme catalyses UMP + ATP = UDP + ADP. The protein operates within pyrimidine metabolism; CTP biosynthesis via de novo pathway; UDP from UMP (UMPK route): step 1/1. With respect to regulation, inhibited by UTP. Its function is as follows. Catalyzes the reversible phosphorylation of UMP to UDP. The chain is Uridylate kinase from Rickettsia conorii (strain ATCC VR-613 / Malish 7).